Here is a 398-residue protein sequence, read N- to C-terminus: NADH-ubiquinone oxidoreductase 49 kDa subunit (398 aa).

The protein belongs to the complex I 49 kDa subunit family.

The protein localises to the mitochondrion. It carries out the reaction a ubiquinone + NADH + 5 H(+)(in) = a ubiquinol + NAD(+) + 4 H(+)(out). Functionally, core subunit of the mitochondrial membrane respiratory chain NADH dehydrogenase (Complex I) that is believed to belong to the minimal assembly required for catalysis. Complex I functions in the transfer of electrons from NADH to the respiratory chain. The immediate electron acceptor for the enzyme is believed to be ubiquinone. Component of the iron-sulfur (IP) fragment of the enzyme. Component of the iron-sulfur (IP) fragment of the enzyme. The polypeptide is NADH-ubiquinone oxidoreductase 49 kDa subunit (NAD7) (Pylaiella littoralis (Seaweed)).